Consider the following 493-residue polypeptide: Lysine--tRNA ligase (493 aa).

Mg(2+) contacts are provided by Glu402 and Glu409.

The protein belongs to the class-II aminoacyl-tRNA synthetase family. Homodimer. Mg(2+) serves as cofactor.

Its subcellular location is the cytoplasm. The catalysed reaction is tRNA(Lys) + L-lysine + ATP = L-lysyl-tRNA(Lys) + AMP + diphosphate. The protein is Lysine--tRNA ligase of Fusobacterium nucleatum subsp. nucleatum (strain ATCC 25586 / DSM 15643 / BCRC 10681 / CIP 101130 / JCM 8532 / KCTC 2640 / LMG 13131 / VPI 4355).